The chain runs to 303 residues: Probable cell division protein WhiA (303 aa).

Residues 272-303 constitute a DNA-binding region (H-T-H motif); it reads SIQQLADSLSRPLTKSGVNHRLRKINKIADEL.

Belongs to the WhiA family.

Involved in cell division and chromosome segregation. This is Probable cell division protein WhiA from Streptococcus sanguinis (strain SK36).